A 157-amino-acid chain; its full sequence is 2-C-methyl-D-erythritol 2,4-cyclodiphosphate synthase (157 aa).

Residues aspartate 8 and histidine 10 each contribute to the a divalent metal cation site. Residues 8 to 10 (DVH) and 34 to 35 (HS) each bind 4-CDP-2-C-methyl-D-erythritol 2-phosphate. Position 42 (histidine 42) interacts with a divalent metal cation. Residues 56–58 (DIG), 61–65 (FPDTD), 100–106 (AQAPKML), 132–135 (TTTE), phenylalanine 139, and arginine 142 contribute to the 4-CDP-2-C-methyl-D-erythritol 2-phosphate site.

It belongs to the IspF family. As to quaternary structure, homotrimer. It depends on a divalent metal cation as a cofactor.

It catalyses the reaction 4-CDP-2-C-methyl-D-erythritol 2-phosphate = 2-C-methyl-D-erythritol 2,4-cyclic diphosphate + CMP. It participates in isoprenoid biosynthesis; isopentenyl diphosphate biosynthesis via DXP pathway; isopentenyl diphosphate from 1-deoxy-D-xylulose 5-phosphate: step 4/6. Involved in the biosynthesis of isopentenyl diphosphate (IPP) and dimethylallyl diphosphate (DMAPP), two major building blocks of isoprenoid compounds. Catalyzes the conversion of 4-diphosphocytidyl-2-C-methyl-D-erythritol 2-phosphate (CDP-ME2P) to 2-C-methyl-D-erythritol 2,4-cyclodiphosphate (ME-CPP) with a corresponding release of cytidine 5-monophosphate (CMP). The protein is 2-C-methyl-D-erythritol 2,4-cyclodiphosphate synthase of Photorhabdus laumondii subsp. laumondii (strain DSM 15139 / CIP 105565 / TT01) (Photorhabdus luminescens subsp. laumondii).